A 138-amino-acid polypeptide reads, in one-letter code: ATP synthase epsilon chain (138 aa).

The protein belongs to the ATPase epsilon chain family. F-type ATPases have 2 components, CF(1) - the catalytic core - and CF(0) - the membrane proton channel. CF(1) has five subunits: alpha(3), beta(3), gamma(1), delta(1), epsilon(1). CF(0) has three main subunits: a, b and c.

It localises to the cell inner membrane. Produces ATP from ADP in the presence of a proton gradient across the membrane. This is ATP synthase epsilon chain from Cupriavidus metallidurans (strain ATCC 43123 / DSM 2839 / NBRC 102507 / CH34) (Ralstonia metallidurans).